The sequence spans 194 residues: Holliday junction branch migration complex subunit RuvA (194 aa).

The segment at 1-63 is domain I; sequence MFEYMKGMIV…EDEAHLYGFV (63 aa). A domain II region spans residues 64–142; that stretch reads DKEELAMFKK…DSQVEYDQNF (79 aa). The flexible linker stretch occupies residues 143–146; that stretch reads FNHE. The tract at residues 146–194 is domain III; sequence ENKNNNEVVDALMALGYTKHEGEQAASAVRDTSLSTEEMIRKALNWLAR.

It belongs to the RuvA family. As to quaternary structure, homotetramer. Forms an RuvA(8)-RuvB(12)-Holliday junction (HJ) complex. HJ DNA is sandwiched between 2 RuvA tetramers; dsDNA enters through RuvA and exits via RuvB. An RuvB hexamer assembles on each DNA strand where it exits the tetramer. Each RuvB hexamer is contacted by two RuvA subunits (via domain III) on 2 adjacent RuvB subunits; this complex drives branch migration. In the full resolvosome a probable DNA-RuvA(4)-RuvB(12)-RuvC(2) complex forms which resolves the HJ.

Its subcellular location is the cytoplasm. Functionally, the RuvA-RuvB-RuvC complex processes Holliday junction (HJ) DNA during genetic recombination and DNA repair, while the RuvA-RuvB complex plays an important role in the rescue of blocked DNA replication forks via replication fork reversal (RFR). RuvA specifically binds to HJ cruciform DNA, conferring on it an open structure. The RuvB hexamer acts as an ATP-dependent pump, pulling dsDNA into and through the RuvAB complex. HJ branch migration allows RuvC to scan DNA until it finds its consensus sequence, where it cleaves and resolves the cruciform DNA. This Alkaliphilus metalliredigens (strain QYMF) protein is Holliday junction branch migration complex subunit RuvA.